Reading from the N-terminus, the 156-residue chain is 6,7-dimethyl-8-ribityllumazine synthase (156 aa).

5-amino-6-(D-ribitylamino)uracil contacts are provided by residues phenylalanine 23, 57 to 59 (AYE), and 81 to 83 (AII). 86–87 (GT) is a binding site for (2S)-2-hydroxy-3-oxobutyl phosphate. Residue histidine 89 is the Proton donor of the active site. Phenylalanine 114 contacts 5-amino-6-(D-ribitylamino)uracil. (2S)-2-hydroxy-3-oxobutyl phosphate is bound at residue arginine 128.

This sequence belongs to the DMRL synthase family.

It carries out the reaction (2S)-2-hydroxy-3-oxobutyl phosphate + 5-amino-6-(D-ribitylamino)uracil = 6,7-dimethyl-8-(1-D-ribityl)lumazine + phosphate + 2 H2O + H(+). It participates in cofactor biosynthesis; riboflavin biosynthesis; riboflavin from 2-hydroxy-3-oxobutyl phosphate and 5-amino-6-(D-ribitylamino)uracil: step 1/2. Its function is as follows. Catalyzes the formation of 6,7-dimethyl-8-ribityllumazine by condensation of 5-amino-6-(D-ribitylamino)uracil with 3,4-dihydroxy-2-butanone 4-phosphate. This is the penultimate step in the biosynthesis of riboflavin. The polypeptide is 6,7-dimethyl-8-ribityllumazine synthase (Helicobacter pylori (strain J99 / ATCC 700824) (Campylobacter pylori J99)).